A 347-amino-acid chain; its full sequence is D-alanine--D-alanine ligase (347 aa).

The ATP-grasp domain maps to 131–333; the sequence is KRVLESAGIA…YPELIERLVD (203 aa). 161–216 contacts ATP; that stretch reads EEKLAYPVFTKPSNMGSSVGISKSENQEELRQALKLAFRYDSRVLVEQGVNAREIE. Residues Asp287, Glu300, and Asn302 each coordinate Mg(2+).

Belongs to the D-alanine--D-alanine ligase family. Requires Mg(2+) as cofactor. The cofactor is Mn(2+).

It localises to the cytoplasm. The enzyme catalyses 2 D-alanine + ATP = D-alanyl-D-alanine + ADP + phosphate + H(+). Its pathway is cell wall biogenesis; peptidoglycan biosynthesis. Functionally, cell wall formation. In Streptococcus pneumoniae (strain ATCC BAA-255 / R6), this protein is D-alanine--D-alanine ligase.